The sequence spans 124 residues: Heat-labile enterotoxin B chain (124 aa).

The N-terminal stretch at 1 to 21 is a signal peptide; it reads MNKVKCYVLFTALLSSLYAHG. An intrachain disulfide couples Cys30 to Cys107.

In terms of assembly, heterohexamer of one A chain and of five B chains.

Functionally, the biological activity of the toxin is produced by the A chain, which activates intracellular adenyl cyclase. The protein is Heat-labile enterotoxin B chain (eltB) of Escherichia coli.